The chain runs to 468 residues: Glucose-dependent insulinotropic receptor (468 aa).

The Extracellular portion of the chain corresponds to 1–6; sequence MESSFS. The chain crosses the membrane as a helical span at residues 7-27; the sequence is FGVILAVLTILIIAVNALVVV. The Cytoplasmic segment spans residues 28 to 37; sequence AMLLSIYKND. A helical membrane pass occupies residues 38 to 58; that stretch reads GVGLCFTLNLAVADTLIGVAI. Residues 59 to 81 are Extracellular-facing; sequence SGLVTDQLSSSAQHTQKTLCSLR. Residues 82–102 traverse the membrane as a helical segment; that stretch reads MAFVTSSAAASVLTVMLIAFD. Topologically, residues 103 to 125 are cytoplasmic; that stretch reads RYLAIKQPLRYFQIMNGLVAGGC. A helical transmembrane segment spans residues 126-146; that stretch reads IAGLWLISYLIGFLPLGVSIF. Residues 147–164 lie on the Extracellular side of the membrane; that stretch reads QQTTYHGPCTFFAVFHPR. Residues 165–185 form a helical membrane-spanning segment; that stretch reads FVLTLSCAGFFPAVLLFVFFY. The Cytoplasmic portion of the chain corresponds to 186–226; the sequence is CDMLKIASVHSQHIRKMEHAGAMVGACRPPRPVNDFKAVRT. Residues 227-247 form a helical membrane-spanning segment; sequence VSVLIGSFTLSWSPFLITSIV. Over 248–262 the chain is Extracellular; that stretch reads QVACHKCCLYQVLEK. Residues 263–283 traverse the membrane as a helical segment; sequence YLWLLGVGNSLLNPLIYAYWQ. Topologically, residues 284 to 468 are cytoplasmic; sequence REVRQQLCHM…MSDPLRTCRG (185 aa).

The protein belongs to the G-protein coupled receptor 1 family. Expression restricted to the beta-cells of pancreatic islets.

The protein resides in the cell membrane. In terms of biological role, receptor for the endogenous fatty-acid ethanolamide oleoylethanolamide (OEA) and lysophosphatidylcholine (LPC). Functions as a glucose-dependent insulinotropic receptor. The activity of this receptor is mediated by G proteins which activate adenylate cyclase. Seems to act through a G(s) mediated pathway. The protein is Glucose-dependent insulinotropic receptor (Gpr119) of Rattus norvegicus (Rat).